The primary structure comprises 283 residues: Pantothenate synthetase (283 aa).

30 to 37 (MGYYHAGH) provides a ligand contact to ATP. The active-site Proton donor is the H37. Q61 is a binding site for (R)-pantoate. Q61 contributes to the beta-alanine binding site. 147 to 150 (GQKD) contributes to the ATP binding site. Residue Q153 participates in (R)-pantoate binding. ATP is bound by residues V176 and 184 to 187 (MSSR).

This sequence belongs to the pantothenate synthetase family. In terms of assembly, homodimer.

The protein localises to the cytoplasm. The enzyme catalyses (R)-pantoate + beta-alanine + ATP = (R)-pantothenate + AMP + diphosphate + H(+). Its pathway is cofactor biosynthesis; (R)-pantothenate biosynthesis; (R)-pantothenate from (R)-pantoate and beta-alanine: step 1/1. Catalyzes the condensation of pantoate with beta-alanine in an ATP-dependent reaction via a pantoyl-adenylate intermediate. This chain is Pantothenate synthetase, found in Nitratidesulfovibrio vulgaris (strain ATCC 29579 / DSM 644 / CCUG 34227 / NCIMB 8303 / VKM B-1760 / Hildenborough) (Desulfovibrio vulgaris).